The following is a 396-amino-acid chain: Putative 3-phosphoinositide-dependent protein kinase 2 (396 aa).

Polar residues predominate over residues 1-11 (MVRTQTESSTP). Positions 1–53 (MVRTQTESSTPPGIPGGSRQGPAMDGTAAEPRPGAGSLQHAQPPPQPRKKRPE) are disordered. Residues 55–315 (FKFGKILGEG…YGPLKAHPFF (261 aa)) form the Protein kinase domain. Residues 65–67 (SFS) and Lys84 each bind ATP. The tract at residues 86-130 (LEKRHIIKENKVPYVTRERDVMSRLDHPFFVKLYFTFQDDEKLYF) is PIF-pocket. Residues 133–135 (SYA) and Glu139 contribute to the ATP site. Asp178 functions as the Proton acceptor in the catalytic mechanism. Glu182 and Asp196 together coordinate ATP.

It belongs to the protein kinase superfamily. AGC Ser/Thr protein kinase family. PDPK1 subfamily. Phosphorylated on tyrosine and serine/threonine.

It is found in the cytoplasm. The protein resides in the membrane. It catalyses the reaction L-seryl-[protein] + ATP = O-phospho-L-seryl-[protein] + ADP + H(+). It carries out the reaction L-threonyl-[protein] + ATP = O-phospho-L-threonyl-[protein] + ADP + H(+). Functionally, phosphorylates and activates not only PKB/AKT, but also PKA, PKC-zeta, RPS6KA1 and RPS6KB1. May play a general role in signaling processes and in development. The protein is Putative 3-phosphoinositide-dependent protein kinase 2 of Homo sapiens (Human).